A 187-amino-acid chain; its full sequence is Elongation factor P (187 aa).

Belongs to the elongation factor P family.

The protein localises to the cytoplasm. It functions in the pathway protein biosynthesis; polypeptide chain elongation. Its function is as follows. Involved in peptide bond synthesis. Stimulates efficient translation and peptide-bond synthesis on native or reconstituted 70S ribosomes in vitro. Probably functions indirectly by altering the affinity of the ribosome for aminoacyl-tRNA, thus increasing their reactivity as acceptors for peptidyl transferase. The chain is Elongation factor P from Prochlorococcus marinus (strain NATL2A).